The primary structure comprises 610 residues: Chaperone protein DnaK (610 aa).

Thr173 is subject to Phosphothreonine; by autocatalysis. Disordered regions lie at residues 525 to 544 (ENIG…ALKT) and 576 to 610 (AAQQ…DDKK). The span at 529 to 542 (EEDKKSAEEKKDAL) shows a compositional bias: basic and acidic residues. Over residues 576–592 (AAQQQQQAQGANAGQNN) the composition is skewed to low complexity. A compositionally biased stretch (basic and acidic residues) spans 599–610 (AEFKEVKDDDKK).

This sequence belongs to the heat shock protein 70 family.

Acts as a chaperone. The protein is Chaperone protein DnaK of Staphylococcus aureus (strain Mu3 / ATCC 700698).